The sequence spans 267 residues: Regulatory protein RecX (267 aa).

This sequence belongs to the RecX family.

It localises to the cytoplasm. In terms of biological role, modulates RecA activity. This is Regulatory protein RecX from Leuconostoc mesenteroides subsp. mesenteroides (strain ATCC 8293 / DSM 20343 / BCRC 11652 / CCM 1803 / JCM 6124 / NCDO 523 / NBRC 100496 / NCIMB 8023 / NCTC 12954 / NRRL B-1118 / 37Y).